A 128-amino-acid chain; its full sequence is UPF0325 protein YaeH (128 aa).

This sequence belongs to the UPF0325 family.

This Escherichia coli (strain ATCC 8739 / DSM 1576 / NBRC 3972 / NCIMB 8545 / WDCM 00012 / Crooks) protein is UPF0325 protein YaeH.